Here is a 446-residue protein sequence, read N- to C-terminus: Choline monooxygenase, chloroplastic (446 aa).

Residues 1–65 (MAASATTMLL…NTSTNKIITK (65 aa)) constitute a chloroplast transit peptide. The region spanning 127–234 (WQVAGYSEQV…VAEWGPFILI (108 aa)) is the Rieske domain. Positions 169, 171, 188, and 191 each coordinate [2Fe-2S] cluster. Residues His-294 and His-299 each coordinate Fe cation.

Belongs to the choline monooxygenase family. Requires [2Fe-2S] cluster as cofactor. It depends on Fe cation as a cofactor. Mg(2+) is required as a cofactor. In terms of tissue distribution, expressed in roots and leaves.

Its subcellular location is the plastid. The protein localises to the chloroplast stroma. It catalyses the reaction choline + 2 reduced [2Fe-2S]-[ferredoxin] + O2 + 2 H(+) = betaine aldehyde hydrate + 2 oxidized [2Fe-2S]-[ferredoxin] + H2O. It participates in amine and polyamine biosynthesis; betaine biosynthesis via choline pathway; betaine aldehyde from choline (monooxygenase route): step 1/1. Catalyzes the first step of the osmoprotectant glycine betaine synthesis. The sequence is that of Choline monooxygenase, chloroplastic (CMO) from Beta vulgaris (Sugar beet).